The primary structure comprises 343 residues: Dimethyladenosine transferase 1, mitochondrial (343 aa).

The N-terminal 27 residues, 1-27 (MAASGKLSTWRLPPLPTIREIIKLLRV), are a transit peptide targeting the mitochondrion. The S-adenosyl-L-methionine site is built by L38, G63, E85, K86, D111, V112, and N141.

It belongs to the class I-like SAM-binding methyltransferase superfamily. rRNA adenine N(6)-methyltransferase family. KsgA subfamily. As to quaternary structure, interacts with mitochondrial RNA polymerase POLRMT. Interacts with TFAM. Bound to the maturing mtSSU until the late stages of assembly.

The protein resides in the mitochondrion. The enzyme catalyses adenosine(N)/adenosine(N+1) in rRNA + 4 S-adenosyl-L-methionine = N(6)-dimethyladenosine(N)/N(6)-dimethyladenosine(N+1) in rRNA + 4 S-adenosyl-L-homocysteine + 4 H(+). Its function is as follows. S-adenosyl-L-methionine-dependent methyltransferase which specifically dimethylates mitochondrial 12S rRNA at the conserved stem loop. Also required for basal transcription of mitochondrial DNA, probably via its interaction with POLRMT and TFAM. Stimulates transcription independently of the methyltransferase activity. Functionally, mitochondrial methyltransferase which uses S-adenosyl methionine to dimethylate two highly conserved adjacent adenosine residues (A1583 and A1584) within the loop of helix 45 at the 3-prime end of 12S rRNA, thereby regulating the assembly or stability of the small subunit of the mitochondrial ribosome. Also required for basal transcription of mitochondrial DNA, probably via its interaction with POLRMT and TFAM. Stimulates transcription independently of the methyltransferase activity. This is Dimethyladenosine transferase 1, mitochondrial (TFB1M) from Pongo abelii (Sumatran orangutan).